The primary structure comprises 1232 residues: MKEEVKGIPVRVALRCRPLVPKEISEGCQMCLSFVPGEPQVVVGTDKSFTYDFVFDPSTEQEEVFNTAVAPLIKGVFKGYNATVLAYGQTGSGKTYSMGGAYTAEQENEPTVGVIPRVIQLLFKEIDKKSDFEFTLKVSYLEIYNEEILDLLCPSREKAQINIREDPKEGIKIVGLTEKTVLVALDTVSCLEQGNNSRTVASTAMNSQSSRSHAIFTISLEQRKKSDKNSSFRSKLHLVDLAGSERQKKTKAEGDRLKEGININRGLLCLGNVISALGDDKKGGFVPYRDSKLTRLLQDSLGGNSHTLMIACVSPADSNLEETLNTLRYADRARKIKNKPIVNIDPQTAELNHLKQQVQQLQVLLLQAHGGTLPGSITVEPSENLQSLMEKNQSLVEENEKLSRGLSEAAGQTAQMLERIILTEQANEKMNAKLEELRQHAACKLDLQKLVETLEDQELKENVEIICNLQQLITQLSDETVACMAAAIDTAVEQEAQVETSPETSRSSDAFTTQHALRQAQMSKELVELNKALALKEALARKMTQNDSQLQPIQYQYQDNIKELELEVINLQKEKEELVLELQTAKKDANQAKLSERRRKRLQELEGQIADLKKKLNEQSKLLKLKESTERTVSKLNQEIRMMKNQRVQLMRQMKEDAEKFRQWKQKKDKEVIQLKERDRKRQYELLKLERNFQKQSNVLRRKTEEAAAANKRLKDALQKQREVADKRKETQSRGMEGTAARVKNWLGNEIEVMVSTEEAKRHLNDLLEDRKILAQDVAQLKEKKESGENPPPKLRRRTFSLTEVRGQVSESEDSITKQIESLETEMEFRSAQIADLQQKLLDAESEDRPKQRWENIATILEAKCALKYLIGELVSSKIQVSKLESSLKQSKTSCADMQKMLFEERNHFAEIETELQAELVRMEQQHQEKVLYLLSQLQQSQMAEKQLEESVSEKEQQLLSTLKCQDEELEKMREVCEQNQQLLRENEIIKQKLTLLQVASRQKHLPKDTLLSPDSSFEYVPPKPKPSRVKEKFLEQSMDIEDLKYCSEHSVNEHEDGDGDDDEGDDEEWKPTKLVKVSRKNIQGCSCKGWCGNKQCGCRKQKSDCGVDCCCDPTKCRNRQQGKDSLGTVERTQDSEGSFKLEDPTEVTPGLSFFNPVCATPNSKILKEMCDVEQVLSKKTPPAPSPFDLPELKHVATEYQENKAPGKKKKRALASNTSFFSGCSPIEEEAH.

Positions 9 to 336 constitute a Kinesin motor domain; it reads PVRVALRCRP…LRYADRARKI (328 aa). ATP is bound at residue 88–95; it reads GQTGSGKT. Residues 350–999 are a coiled coil; the sequence is ELNHLKQQVQ…IKQKLTLLQV (650 aa). A Phosphoserine modification is found at serine 394. Positions 496-515 are disordered; the sequence is AQVETSPETSRSSDAFTTQH. Over residues 497 to 515 the composition is skewed to polar residues; sequence QVETSPETSRSSDAFTTQH. A required for the interaction with PRC1 region spans residues 663–1232; sequence QWKQKKDKEV…GCSPIEEEAH (570 aa). The Nuclear localization signal motif lies at 793–798; the sequence is PKLRRR. Position 799 is a phosphothreonine (threonine 799). Phosphoserine occurs at positions 801, 810, 815, and 951. Threonine 995 carries the phosphothreonine modification. Residues 1000-1232 are globular; sequence ASRQKHLPKD…GCSPIEEEAH (233 aa). Phosphoserine occurs at positions 1001, 1013, 1017, 1028, and 1126. The interval 1086-1144 is CRD; required for [4Fe-4S] cluster binding and localization to the spindle midzone and midbody during anaphase and telophase; the sequence is CSCKGWCGNKQCGCRKQKSDCGVDCCCDPTKCRNRQQGKDSLGTVERTQDSEGSFKLED. The segment at 1122 to 1142 is disordered; that stretch reads QGKDSLGTVERTQDSEGSFKL. Residues 1132-1142 are compositionally biased toward basic and acidic residues; the sequence is RTQDSEGSFKL. Threonine 1181 is modified (phosphothreonine). At serine 1186 the chain carries Phosphoserine. Lysine 1194 is covalently cross-linked (Glycyl lysine isopeptide (Lys-Gly) (interchain with G-Cter in SUMO2)). Position 1225 is a phosphoserine (serine 1225).

Belongs to the TRAFAC class myosin-kinesin ATPase superfamily. Kinesin family. Chromokinesin subfamily. Interacts with the cytosolic iron-sulfur protein assembly (CIA) complex components CIAO2B and MMS19; the interactions facilitate the transfer of Fe-S clusters to KIF4A to ensure proper localization of KIF4A to mitotic machinery components. Interacts (via C-terminus) with unphosphorylated PRC1 (via N-terminus); the interaction is required for the progression of mitosis. [2Fe-2S] cluster is required as a cofactor. Requires [4Fe-4S] cluster as cofactor. In terms of tissue distribution, highly expressed in hematopoietic tissues, fetal liver, spleen, thymus and adult thymus and bone marrow. Lower levels are found in heart, testis, kidney, colon and lung.

It is found in the nucleus matrix. Its subcellular location is the cytoplasm. It localises to the cytoskeleton. The protein resides in the spindle. The protein localises to the midbody. It is found in the chromosome. Iron-sulfur (Fe-S) cluster binding motor protein that has a role in chromosome segregation during mitosis. Translocates PRC1 to the plus ends of interdigitating spindle microtubules during the metaphase to anaphase transition, an essential step for the formation of an organized central spindle midzone and midbody and for successful cytokinesis. May play a role in mitotic chromosomal positioning and bipolar spindle stabilization. This chain is Chromosome-associated kinesin KIF4A (KIF4A), found in Homo sapiens (Human).